A 62-amino-acid chain; its full sequence is UPF0434 protein Arad_4458 (62 aa).

The protein belongs to the UPF0434 family.

In Rhizobium rhizogenes (strain K84 / ATCC BAA-868) (Agrobacterium radiobacter), this protein is UPF0434 protein Arad_4458.